The sequence spans 189 residues: Transcription factor FapR (189 aa).

This sequence belongs to the FapR family.

Its function is as follows. Transcriptional factor involved in regulation of membrane lipid biosynthesis by repressing genes involved in fatty acid and phospholipid metabolism. The sequence is that of Transcription factor FapR from Listeria innocua serovar 6a (strain ATCC BAA-680 / CLIP 11262).